The chain runs to 457 residues: Cell division cycle 20.1, cofactor of APC complex (457 aa).

WD repeat units follow at residues 138 to 175 (VDDF…TSEL), 180 to 219 (EEKG…QLRT), 223 to 260 (GHQS…PIVE), 264 to 303 (GHTQ…SNST), 312 to 354 (EHTS…CLNS), 356 to 397 (DTGS…KMAE), and 400 to 439 (GHTS…ETAK).

Belongs to the WD repeat CDC20/Fizzy family. As to quaternary structure, the APC/C is composed of at least 11 subunits that stay tightly associated throughout the cell cycle. Interacts with APC10, FZR1, FZR2, FZR3. Binds to GIG1 and PYM. Part of the mitotic checkpoint complex (MCC); interacts with MAD2, BUB3.1, BUBR1 and BUB1. Binds to cyclins CYCA1-2, CYCB2-1 and CYCB2-2. Interacts with PANS1. As to expression, expressed in meristems and organ primordia. Present in flowers, leaves, stems, roots, pollen grains and developing seeds.

The protein resides in the nucleus. It functions in the pathway protein modification; protein ubiquitination. Functionally, component of the anaphase promoting complex/cyclosome (APC/C), a cell cycle-regulated E3 ubiquitin-protein ligase complex that controls progression through mitosis and the G1 phase of the cell cycle. This is Cell division cycle 20.1, cofactor of APC complex (CDC20-1) from Arabidopsis thaliana (Mouse-ear cress).